The primary structure comprises 289 residues: Cell division protein ZipA (289 aa).

A topological domain (periplasmic) is located at residue methionine 1. A helical transmembrane segment spans residues 2 to 22; sequence EIGLREWLIVIGIIVIAGILF. The Cytoplasmic segment spans residues 23 to 289; it reads DGWRRMRGSK…ERRALTQRRG (267 aa). Residues 48 to 141 are disordered; sequence DEEETTSAEV…KPAQRITEDK (94 aa). 3 stretches are compositionally biased toward basic and acidic residues: residues 64–77, 85–106, and 123–141; these read LDTHKEPQLDEHDL, REGKRSNSDKRGNSDKKRKDEP, and GRDDDFPDDKPAQRITEDK.

Belongs to the ZipA family. In terms of assembly, interacts with FtsZ via their C-terminal domains.

The protein resides in the cell inner membrane. Functionally, essential cell division protein that stabilizes the FtsZ protofilaments by cross-linking them and that serves as a cytoplasmic membrane anchor for the Z ring. Also required for the recruitment to the septal ring of downstream cell division proteins. This chain is Cell division protein ZipA, found in Pseudomonas savastanoi pv. phaseolicola (strain 1448A / Race 6) (Pseudomonas syringae pv. phaseolicola (strain 1448A / Race 6)).